The sequence spans 304 residues: Thyroxine 5-deiodinase (304 aa).

A disordered region spans residues 1–22 (MPRQAASRLVVGEGEGPPGASG). The Cytoplasmic portion of the chain corresponds to 1 to 42 (MPRQAASRLVVGEGEGPPGASGPAATMLRSLLLHSLRLCAQT). A helical; Signal-anchor for type II membrane protein transmembrane segment spans residues 43-62 (ASCLVLFPRFLGTAFMLWLL). Residues 63–304 (DFLCIRKHFL…QLHGTRPRRL (242 aa)) lie on the Extracellular side of the membrane. Residue U170 is part of the active site. A non-standard amino acid (selenocysteine) is located at residue U170.

Belongs to the iodothyronine deiodinase family. Monomer. Homodimer. May undergo minor heretodimerization with DIO1 and DIO2. Neonatal skin, placenta, skeletal muscle and cerebral cortex.

It localises to the cell membrane. The protein resides in the endosome membrane. The catalysed reaction is 3,3',5'-triiodo-L-thyronine + iodide + A + H(+) = L-thyroxine + AH2. It catalyses the reaction 3,3'-diiodo-L-thyronine + iodide + A + H(+) = 3,3',5-triiodo-L-thyronine + AH2. The enzyme catalyses 3-iodo-L-thyronine + iodide + A + H(+) = 3,5-diiodo-L-thyronine + AH2. It carries out the reaction L-thyronine + iodide + A + H(+) = 3-iodo-L-thyronine + AH2. The catalysed reaction is 3',5'-diiodo-L-thyronine + iodide + A + H(+) = 3,3',5'-triiodo-L-thyronine + AH2. It catalyses the reaction 3'-iodo-L-thyronine + iodide + A + H(+) = 3,3'-diiodo-L-thyronine + AH2. The enzyme catalyses 3,3',5'-triiodothyronamine + iodide + A + H(+) = 3,3',5,5'-tetraiodothyronamine + AH2. It carries out the reaction 3',5'-diiodothyronamine + iodide + A + H(+) = 3,3',5'-triiodothyronamine + AH2. The catalysed reaction is 3,3'-diiodothyronamine + iodide + A + H(+) = 3,3',5-triiodothyronamine + AH2. It catalyses the reaction 3-iodothyronamine + iodide + A + H(+) = 3,5-diiodothyronamine + AH2. The enzyme catalyses 3'-iodothyronamine + iodide + A + H(+) = 3,3'-diiodothyronamine + AH2. It carries out the reaction thyronamine + iodide + A + H(+) = 3-iodothyronamine + AH2. Functionally, plays a crucial role in the metabolism of thyroid hormones (TH) and has specific roles in TH activation and inactivation by deiodination. Catalyzes the deiodination of L-thyroxine (T4) to 3,3',5'-triiodothyronine (rT3), 3,5-diiodothyronine (3,5-T2) to 3-monoiodothyronine (3-T1), rT3 to 3',5'-diiodothyronine (3',5'-T2) and 3,3'-diiodothyronine (3,3'-T2) to 3'-monoiodothyronine (3'-T1) via inner-ring deiodination (IRD). Catalyzes the deiodination of 3,5,3'-triiodothyronine (T3) to 3,3'-diiodothyronine (3,3'-T2) via IRD. Catalyzes the deiodination of 3-T1 to L-thyronine (T0) via outer-ring deiodination (ORD). Catalyzes the tyrosyl ring deiodinations of T4AM (3,3',5,5'-tetraiodothyronamine), rT3AM (3,3',5'-triiodothyronamine), T3AM (3,5,3'-triiodothyronamine), 3,5-T2AM (3,5-diiodothyronamine), 3,3'-T2AM (3,3'-diiodothyronamine) and 3-T1AM (3-iodothyronamine). This chain is Thyroxine 5-deiodinase (Dio3), found in Rattus norvegicus (Rat).